The sequence spans 363 residues: Large ribosomal subunit protein uL4B (363 aa).

The segment at 280-363 (PENIISNADV…EKFLSVLHEN (84 aa)) is C-terminal-extended nuclear localization signal.

This sequence belongs to the universal ribosomal protein uL4 family. Component of the large ribosomal subunit (LSU). Mature yeast ribosomes consist of a small (40S) and a large (60S) subunit. The 40S small subunit contains 1 molecule of ribosomal RNA (18S rRNA) and at least 33 different proteins. The large 60S subunit contains 3 rRNA molecules (25S, 5.8S and 5S rRNA) and at least 46 different proteins. uL4 is associated with the polypeptide exit tunnel. uL4 interacts with its chaperone ACL4 and the nuclear import receptor KAP104.

It is found in the cytoplasm. Functionally, component of the ribosome, a large ribonucleoprotein complex responsible for the synthesis of proteins in the cell. The small ribosomal subunit (SSU) binds messenger RNAs (mRNAs) and translates the encoded message by selecting cognate aminoacyl-transfer RNA (tRNA) molecules. The large subunit (LSU) contains the ribosomal catalytic site termed the peptidyl transferase center (PTC), which catalyzes the formation of peptide bonds, thereby polymerizing the amino acids delivered by tRNAs into a polypeptide chain. The nascent polypeptides leave the ribosome through a tunnel in the LSU and interact with protein factors that function in enzymatic processing, targeting, and the membrane insertion of nascent chains at the exit of the ribosomal tunnel. This Schizosaccharomyces pombe (strain 972 / ATCC 24843) (Fission yeast) protein is Large ribosomal subunit protein uL4B (rpl401).